A 165-amino-acid polypeptide reads, in one-letter code: Nucleotide-binding protein P9301_05061 (165 aa).

It belongs to the YajQ family.

Its function is as follows. Nucleotide-binding protein. The chain is Nucleotide-binding protein P9301_05061 from Prochlorococcus marinus (strain MIT 9301).